The chain runs to 347 residues: Protein-arginine kinase (347 aa).

The region spanning 22 to 247 is the Phosphagen kinase C-terminal domain; the sequence is LVVSTRIRLA…EQVIQAERHA (226 aa). ATP is bound by residues 25 to 29, His85, Arg118, 169 to 173, and 200 to 205; these read STRIR, RASVM, and RGRYGE. Positions 330–335 match the RDXXRA motif of the pArg binding pocket involved in allosteric regulation motif; that stretch reads RDRERA.

The protein belongs to the ATP:guanido phosphotransferase family.

The enzyme catalyses L-arginyl-[protein] + ATP = N(omega)-phospho-L-arginyl-[protein] + ADP + H(+). Its activity is regulated as follows. Appears to be allosterically activated by the binding of pArg-containing polypeptides to the pArg-binding pocket localized in the C-terminal domain of McsB. Functionally, catalyzes the specific phosphorylation of arginine residues in proteins. The sequence is that of Protein-arginine kinase from Exiguobacterium sp. (strain ATCC BAA-1283 / AT1b).